The following is a 340-amino-acid chain: Citramalyl-CoA lyase, mitochondrial (340 aa).

The N-terminal 22 residues, 1 to 22, are a transit peptide targeting the mitochondrion; the sequence is MALRLLRRAARGAAAAALLRLK. Tyr50, Lys57, and Lys61 together coordinate substrate. N6-acetyllysine occurs at positions 57 and 61. Lys82 and Lys92 each carry N6-acetyllysine; alternate. Residues Lys82 and Lys92 each carry the N6-succinyllysine; alternate modification. Substrate is bound at residue Arg107. Mg(2+)-binding residues include Glu171 and Asp206. A substrate-binding site is contributed by 272–273; that stretch reads IH. Lys309 carries the N6-succinyllysine modification. Asp320 is an active-site residue.

The protein belongs to the HpcH/HpaI aldolase family. Citrate lyase beta subunit-like subfamily. In terms of assembly, homotrimer. It depends on Mg(2+) as a cofactor.

Its subcellular location is the mitochondrion. It carries out the reaction glyoxylate + acetyl-CoA + H2O = (S)-malate + CoA + H(+). The enzyme catalyses propanoyl-CoA + glyoxylate + H2O = 3-methylmalate + CoA + H(+). The catalysed reaction is (3S)-citramalyl-CoA = pyruvate + acetyl-CoA. It catalyses the reaction (S)-malyl-CoA + H2O = (S)-malate + CoA + H(+). Functionally, mitochondrial citramalyl-CoA lyase indirectly involved in the vitamin B12 metabolism. Converts citramalyl-CoA into acetyl-CoA and pyruvate in the C5-dicarboxylate catabolism pathway. The C5-dicarboxylate catabolism pathway is required to detoxify itaconate, a vitamin B12-poisoning metabolite. Also acts as a malate synthase in vitro, converting glyoxylate and acetyl-CoA to malate. Also displays malyl-CoA thioesterase activity. Also acts as a beta-methylmalate synthase in vitro, by mediating conversion of glyoxylate and propionyl-CoA to beta-methylmalate. Also has very weak citramalate synthase activity in vitro. The sequence is that of Citramalyl-CoA lyase, mitochondrial from Homo sapiens (Human).